Reading from the N-terminus, the 209-residue chain is Ion-translocating oxidoreductase complex subunit G (209 aa).

The chain crosses the membrane as a helical span at residues 9–29 (GITLALFAAGATGLTAVVNSL). Threonine 175 is subject to FMN phosphoryl threonine.

It belongs to the RnfG family. In terms of assembly, the complex is composed of six subunits: RnfA, RnfB, RnfC, RnfD, RnfE and RnfG. It depends on FMN as a cofactor.

The protein localises to the cell inner membrane. In terms of biological role, part of a membrane-bound complex that couples electron transfer with translocation of ions across the membrane. The sequence is that of Ion-translocating oxidoreductase complex subunit G from Yersinia pestis.